A 322-amino-acid polypeptide reads, in one-letter code: uncharacterized protein (322 aa).

Positions 277–322 are disordered; that stretch reads LVTYGGKDGPSDNEDGPSDDEDGPSDDEEGLSKDGVSEYYQSDLDD. Positions 287–305 are enriched in acidic residues; sequence SDNEDGPSDDEDGPSDDEE.

This is an uncharacterized protein from Frog virus 3 (isolate Goorha) (FV-3).